The primary structure comprises 192 residues: MQVILLERISKLGQMGETVKVRDGFARNYLLPLGKALRANAANKTRFEAERATLEARNLERKSEAQTVADVLDGKSFIVVRSAGETGQLYGSVAARDVVDILGAEGFNIGRNQVHLNTPIKSIGLHKVELQLHAEVEIHVELNVARSAEEAERQSKGEELTSVDAIYGVDEDALRPEDFFDPEADGVDEDEA.

The segment at Asp172–Ala192 is disordered. A compositionally biased stretch (acidic residues) spans Phe179 to Ala192.

Belongs to the bacterial ribosomal protein bL9 family.

Functionally, binds to the 23S rRNA. The chain is Large ribosomal subunit protein bL9 from Rhizobium johnstonii (strain DSM 114642 / LMG 32736 / 3841) (Rhizobium leguminosarum bv. viciae).